Reading from the N-terminus, the 227-residue chain is Ion-translocating oxidoreductase complex subunit E (227 aa).

Helical transmembrane passes span 18–38 (ALVQLLGLCPLLAVSATVTNA), 39–59 (LGLGIATILVLVGSNLIVSLV), 69–89 (IPVFVMIIASLVTCVQLLMNA), 93–113 (GLYLSLGIFIPLIVTNCIIIG), 125–145 (LPAVLDGLWMGMGMTAVLVLL), and 182–202 (HFLLAMLPPGAFLGVGFLIAL).

This sequence belongs to the NqrDE/RnfAE family. The complex is composed of six subunits: RnfA, RnfB, RnfC, RnfD, RnfE and RnfG.

It is found in the cell inner membrane. Functionally, part of a membrane-bound complex that couples electron transfer with translocation of ions across the membrane. In Aliivibrio fischeri (strain ATCC 700601 / ES114) (Vibrio fischeri), this protein is Ion-translocating oxidoreductase complex subunit E.